We begin with the raw amino-acid sequence, 928 residues long: cGMP-dependent 3',5'-cyclic phosphodiesterase (928 aa).

Ser-109 is modified (phosphoserine). The interval 188–210 (RRPEAVQNTSADPSEDQKDEKGY) is disordered. 2 GAF domains span residues 228–365 (DATS…GTVL) and 397–536 (DVSV…GISI). Ser-419, Asp-434, Ile-453, Tyr-476, and Thr-487 together coordinate 3',5'-cyclic GMP. The PDEase domain occupies 566-890 (SDDEYTKLLH…EHWTKVSHKF (325 aa)). The Proton donor role is filled by His-644. Zn(2+)-binding residues include His-648, His-684, Asp-685, and Asp-796. Asp-685 contacts Mg(2+).

This sequence belongs to the cyclic nucleotide phosphodiesterase family. PDE2 subfamily. In terms of assembly, homodimer. Requires Zn(2+) as cofactor. The cofactor is Mg(2+). In terms of tissue distribution, expressed in brain and liver.

The protein resides in the cell membrane. Its subcellular location is the cytoplasm. It is found in the mitochondrion matrix. It localises to the mitochondrion inner membrane. The protein localises to the mitochondrion outer membrane. It catalyses the reaction a nucleoside 3',5'-cyclic phosphate + H2O = a nucleoside 5'-phosphate + H(+). It carries out the reaction 3',5'-cyclic GMP + H2O = GMP + H(+). The enzyme catalyses 3',5'-cyclic AMP + H2O = AMP + H(+). Its activity is regulated as follows. The 3',5'-cyclic-AMP phosphodiesterase activity is stimulated by 3',5'-cyclic GMP. Specifically inhibited by Bay 60-7550. When repressed, protected from ionomycin- but not staurosporin-induced cell death. CGMP-activated cyclic nucleotide phosphodiesterase with a dual-specificity for the second messengers cAMP and cGMP, which are key regulators of many important physiological processes. Has a higher efficiency with cGMP compared to cAMP. Plays a role in cell growth and migration. Its function is as follows. Regulates mitochondrial cAMP levels and respiration. Involved in the regulation of mitochondria morphology/dynamics and apoptotic cell death via local modulation of cAMP/PKA signaling in the mitochondrion, including the monitoring of local cAMP levels at the outer mitochondrial membrane and of PKA-dependent phosphorylation of Dnm1l. In Rattus norvegicus (Rat), this protein is cGMP-dependent 3',5'-cyclic phosphodiesterase.